The chain runs to 120 residues: uncharacterized protein (120 aa).

This sequence to the N-terminal region of phage HK97/HK620 Gp37/hpaH.

This is an uncharacterized protein from Escherichia coli (strain K12).